The chain runs to 251 residues: Triosephosphate isomerase, glycosomal (251 aa).

The substrate site is built by Asn-12 and Lys-14. His-96 acts as the Electrophile in catalysis. The active-site Proton acceptor is the Glu-168.

Belongs to the triosephosphate isomerase family. Homodimer.

It is found in the glycosome. It carries out the reaction D-glyceraldehyde 3-phosphate = dihydroxyacetone phosphate. It participates in carbohydrate biosynthesis; gluconeogenesis. Its pathway is carbohydrate degradation; glycolysis; D-glyceraldehyde 3-phosphate from glycerone phosphate: step 1/1. This Trypanosoma cruzi protein is Triosephosphate isomerase, glycosomal.